Reading from the N-terminus, the 661-residue chain is Cyclic di-GMP phosphodiesterase PdeR (661 aa).

The PAS domain occupies 109–179 (GLSFAEQVVS…RRNNRVFFRS (71 aa)). The GGDEF domain maps to 265–397 (NKVGVVYLDL…GRGQFCVFTP (133 aa)). The EAL domain occupies 406–658 (YLWLDTNLRK…AFERWYKRYL (253 aa)).

Interacts with DgcM and MlrA.

It carries out the reaction 3',3'-c-di-GMP + H2O = 5'-phosphoguanylyl(3'-&gt;5')guanosine + H(+). In terms of biological role, part of a signaling cascade that regulates curli biosynthesis. The cascade is composed of two cyclic-di-GMP (c-di-GMP) control modules, in which c-di-GMP controlled by the DgcE/PdeH pair (module I) regulates the activity of the DgcM/PdeR pair (module II), which in turn regulates activity of the transcription factor MlrA and expression of the master biofilm regulator csgD. PdeR acts as a trigger enzyme that connects modules I and II. It inhibits DgcM and MlrA by direct interaction. Inhibition is relieved when PdeR binds and degrades c-di-GMP generated by module I. In Escherichia coli (strain K12), this protein is Cyclic di-GMP phosphodiesterase PdeR.